A 448-amino-acid chain; its full sequence is Maltoporin (448 aa).

The first 25 residues, 1 to 25, serve as a signal peptide directing secretion; that stretch reads MMITLRKLPLAVAVMAGIFAAQASA.

Belongs to the porin LamB (TC 1.B.3) family. Homotrimer formed of three 18-stranded antiparallel beta-barrels, containing three independent channels.

It localises to the cell outer membrane. The catalysed reaction is beta-maltose(in) = beta-maltose(out). Involved in the transport of maltose and maltodextrins. The chain is Maltoporin from Cronobacter sakazakii (strain ATCC BAA-894) (Enterobacter sakazakii).